We begin with the raw amino-acid sequence, 78 residues long: DNA-directed RNA polymerase subunit omega (78 aa).

It belongs to the RNA polymerase subunit omega family. In terms of assembly, in cyanobacteria the RNAP catalytic core is composed of 2 alpha, 1 beta, 1 beta', 1 gamma and 1 omega subunit. When a sigma factor is associated with the core the holoenzyme is formed, which can initiate transcription.

It carries out the reaction RNA(n) + a ribonucleoside 5'-triphosphate = RNA(n+1) + diphosphate. Its function is as follows. Promotes RNA polymerase assembly. Latches the N- and C-terminal regions of the beta' subunit thereby facilitating its interaction with the beta and alpha subunits. The chain is DNA-directed RNA polymerase subunit omega from Nostoc punctiforme (strain ATCC 29133 / PCC 73102).